The sequence spans 445 residues: Chromosome partition protein MukF (445 aa).

The tract at residues 213-241 (LSETSNTLKELQDTLQAAGDELQTQILDI) is leucine-zipper.

The protein belongs to the MukF family. In terms of assembly, interacts, and probably forms a ternary complex, with MukE and MukB via its C-terminal region. The complex formation is stimulated by calcium or magnesium. It is required for an interaction between MukE and MukB.

It is found in the cytoplasm. It localises to the nucleoid. Functionally, involved in chromosome condensation, segregation and cell cycle progression. May participate in facilitating chromosome segregation by condensation DNA from both sides of a centrally located replisome during cell division. Not required for mini-F plasmid partitioning. Probably acts via its interaction with MukB and MukE. Overexpression results in anucleate cells. It has a calcium binding activity. The chain is Chromosome partition protein MukF from Vibrio vulnificus (strain CMCP6).